The sequence spans 274 residues: NAD-dependent protein deacetylase (274 aa).

The Deacetylase sirtuin-type domain maps to methionine 1–proline 274. NAD(+) contacts are provided by residues glycine 26–lysine 46 and glutamine 104–aspartate 107. Histidine 122 acts as the Proton acceptor in catalysis. The Zn(2+) site is built by cysteine 130, cysteine 133, cysteine 181, and cysteine 184. NAD(+) contacts are provided by residues glycine 221–serine 223, asparagine 247–glycine 249, and cysteine 265.

The protein belongs to the sirtuin family. Class II subfamily. Zn(2+) serves as cofactor.

Its subcellular location is the cytoplasm. The catalysed reaction is N(6)-acetyl-L-lysyl-[protein] + NAD(+) + H2O = 2''-O-acetyl-ADP-D-ribose + nicotinamide + L-lysyl-[protein]. Its function is as follows. NAD-dependent protein deacetylase which modulates the activities of several enzymes which are inactive in their acetylated form. The sequence is that of NAD-dependent protein deacetylase from Bordetella pertussis (strain Tohama I / ATCC BAA-589 / NCTC 13251).